The chain runs to 181 residues: Adenine phosphoribosyltransferase (181 aa).

Belongs to the purine/pyrimidine phosphoribosyltransferase family. As to quaternary structure, homodimer.

The protein resides in the cytoplasm. It catalyses the reaction AMP + diphosphate = 5-phospho-alpha-D-ribose 1-diphosphate + adenine. It participates in purine metabolism; AMP biosynthesis via salvage pathway; AMP from adenine: step 1/1. Its function is as follows. Catalyzes a salvage reaction resulting in the formation of AMP, that is energically less costly than de novo synthesis. This chain is Adenine phosphoribosyltransferase, found in Rhodopseudomonas palustris (strain HaA2).